Reading from the N-terminus, the 947-residue chain is DEAD-box ATP-dependent RNA helicase 45 (947 aa).

Positions 1-14 are enriched in acidic residues; the sequence is MEEEEVVVVVDEEE. Disordered regions lie at residues 1–132 and 159–221; these read MEEE…EDEI and SMPA…EEFM. Composition is skewed to basic and acidic residues over residues 15–31 and 42–61; these read SERR…KRLD and KEWQ…REQE. Over residues 62–82 the composition is skewed to low complexity; it reads AAAGAGTPAAAAGADGDSNAG. Composition is skewed to acidic residues over residues 88–108 and 196–219; these read DGEE…EDDG and DDSD…DDEE. The short motif at 285–313 is the Q motif element; the sequence is KTWVQSGLTSKLLDTIKKLGFEKPMPIQA. The Helicase ATP-binding domain maps to 316–494; it reads LPIIMSGRDC…RKVLTKPVEI (179 aa). Position 329 to 336 (329 to 336) interacts with ATP; sequence AKTGSGKT. Residues 442–445 carry the DEAD box motif; that stretch reads DEAD. Positions 479-647 constitute a Helicase C-terminal domain; the sequence is QVEILARKVL…AVPQDLKGLA (169 aa). A disordered region spans residues 658-710; it reads TEQAHGTGYGGSGFKFNEEEDEARRSAKKAQAREYGYEEDKSDSDSDEEGGVR. A compositionally biased stretch (acidic residues) spans 697–706; the sequence is DKSDSDSDEE. Residues 854 to 879 are a coiled coil; sequence TELSVKKAKSELKRVLEDCANHALNL.

This sequence belongs to the DEAD box helicase family. DDX46/PRP5 subfamily.

The catalysed reaction is ATP + H2O = ADP + phosphate + H(+). The protein is DEAD-box ATP-dependent RNA helicase 45 of Oryza sativa subsp. japonica (Rice).